The primary structure comprises 227 residues: Large ribosomal subunit protein uL3 (227 aa).

N5-methylglutamine is present on Gln-151.

It belongs to the universal ribosomal protein uL3 family. As to quaternary structure, part of the 50S ribosomal subunit. Forms a cluster with proteins L14 and L19. Methylated by PrmB.

Functionally, one of the primary rRNA binding proteins, it binds directly near the 3'-end of the 23S rRNA, where it nucleates assembly of the 50S subunit. The protein is Large ribosomal subunit protein uL3 of Gluconacetobacter diazotrophicus (strain ATCC 49037 / DSM 5601 / CCUG 37298 / CIP 103539 / LMG 7603 / PAl5).